The following is a 213-amino-acid chain: Elongation factor 1-beta (213 aa).

The segment covering 67–80 (AGKAPAASGSAAAA) has biased composition (low complexity). Residues 67–88 (AGKAPAASGSAAAAAEEEDDED) are disordered.

This sequence belongs to the EF-1-beta/EF-1-delta family. EF-1 is composed of 4 subunits: alpha, beta, delta, and gamma.

Its function is as follows. EF-1-beta and EF-1-delta stimulate the exchange of GDP bound to EF-1-alpha to GTP. This chain is Elongation factor 1-beta (EFB1), found in Candida albicans (strain WO-1) (Yeast).